We begin with the raw amino-acid sequence, 291 residues long: MDKSLLGKLRKETGFGFSKCREALVLARNDYAAAEAWLHEQAEKEGWQKANKLQGRSATEGLIGVIVNHSDMNLGAMVEVNCETDFVARNENFVDLVNTVTSTTLAYRRGIIQRNQKLNMFGDQVTHLREFILTHELSNLRVEHNNPDSMLLSDMVAKVIGKLGENIKLGKAITITTDSDNVIGSYVHGPYVTKVHQCSFGKYGAMVAVKPIKKGIDTSSLALLANKLAQHVVGMNPKVIGQGGEADEKGGESEALLDQEYLLDGSLTVGQFTEKEGVQVVDFVRYECGAK.

The protein belongs to the EF-Ts family.

The protein localises to the mitochondrion. In terms of biological role, associates with the EF-Tu.GDP complex and induces the exchange of GDP to GTP. It remains bound to the aminoacyl-tRNA.EF-Tu.GTP complex up to the GTP hydrolysis stage on the ribosome. This Nematostella vectensis (Starlet sea anemone) protein is Elongation factor Ts, mitochondrial.